The chain runs to 306 residues: Putative B3 domain-containing protein Os03g0621600 (306 aa).

Positions 29–122 (FSVLCLMPIM…QLKTLIFDSS (94 aa)) form a DNA-binding region, TF-B3 1. Positions 139–166 (YDIAMRNSQDEKKKRKQRDISRQGTVKP) are disordered. The segment at residues 210 to 306 (GYVMNNSSIH…VMDVHIIRRK (97 aa)) is a DNA-binding region (TF-B3 2).

It is found in the nucleus. This is Putative B3 domain-containing protein Os03g0621600 from Oryza sativa subsp. japonica (Rice).